The chain runs to 264 residues: Small ribosomal subunit protein uS2 (264 aa).

The interval 225–264 is disordered; that stretch reads GKKAREERQLAAAKDAAGDAKPEAEEAPVAAEAEEAPAAE.

The protein belongs to the universal ribosomal protein uS2 family.

The sequence is that of Small ribosomal subunit protein uS2 from Corynebacterium glutamicum (strain R).